A 236-amino-acid chain; its full sequence is Oligogalacturonate-specific porin KdgM (236 aa).

Residues 1–20 form the signal peptide; that stretch reads MKIKLLTLAVASLVSVNALA.

It belongs to the oligogalacturonate-specific porin KdgM (TC 1.B.35) family. As to quaternary structure, monomer.

Its subcellular location is the cell outer membrane. Porin specific for oligogalacturonides. Also required for full virulence. The protein is Oligogalacturonate-specific porin KdgM (kdgM) of Dickeya dadantii (strain 3937) (Erwinia chrysanthemi (strain 3937)).